The chain runs to 189 residues: Putative manganese efflux pump MntP (189 aa).

6 consecutive transmembrane segments (helical) span residues 3–23 (PISLLFLALAMSTDAFAAALG), 41–61 (LIFGAIETITPVIGWGIGQVA), 69–89 (DHWIAFTLLLVLGLHMIYNGI), 105–125 (FWILAVTAFATSIDALAVGVG), 133–153 (IVIAALAIGLATTVMVTIGVM), and 168–188 (IVGGIVLIIVGATILYEHLSA).

Belongs to the MntP (TC 9.B.29) family.

It is found in the cell inner membrane. Probably functions as a manganese efflux pump. The sequence is that of Putative manganese efflux pump MntP from Pseudomonas savastanoi pv. phaseolicola (strain 1448A / Race 6) (Pseudomonas syringae pv. phaseolicola (strain 1448A / Race 6)).